The following is a 351-amino-acid chain: (S)-coclaurine N-methyltransferase (351 aa).

Residues 91 to 92 (QS), 126 to 134 (VLDLGCGLG), 130 to 132 (GCG), and 153 to 158 (TSSVEQ) contribute to the S-adenosyl-L-methionine site. C326 is a catalytic residue.

It belongs to the CFA/CMAS family. As to expression, expressed in roots, stems, flower buds and at lower levels, in leaves. Restricted to sieve elements of the phloem adjacent or proximal to laticifers.

It is found in the cytoplasm. It catalyses the reaction (S)-coclaurine + S-adenosyl-L-methionine = (S)-N-methylcoclaurine + S-adenosyl-L-homocysteine + H(+). Its pathway is alkaloid biosynthesis; (S)-reticuline biosynthesis; (S)-reticuline from (S)-norcoclaurine: step 2/4. Involved in the biosynthesis of benzylisoquinoline alkaloids. N-methyltransferase methylating (S)-coclaurine. 4'-O-methylcoclaurine and norlaudanine can also be used as substrates. The polypeptide is (S)-coclaurine N-methyltransferase (Papaver somniferum (Opium poppy)).